A 104-amino-acid chain; its full sequence is MSYAVIVTGGKQYKVAEGEFLKIEKLEIATGESVTFDRVLLVANGEEVTIGAPVVAGAKVVAEVVSQGRHDKVRIIKFRRRKHHMKRMGHRQWFTEIKITGIQA.

Belongs to the bacterial ribosomal protein bL21 family. Part of the 50S ribosomal subunit. Contacts protein L20.

In terms of biological role, this protein binds to 23S rRNA in the presence of protein L20. This is Large ribosomal subunit protein bL21 from Pseudomonas putida (strain W619).